A 127-amino-acid polypeptide reads, in one-letter code: Ribonuclease P protein component (127 aa).

The protein belongs to the RnpA family. As to quaternary structure, consists of a catalytic RNA component (M1 or rnpB) and a protein subunit.

The enzyme catalyses Endonucleolytic cleavage of RNA, removing 5'-extranucleotides from tRNA precursor.. Functionally, RNaseP catalyzes the removal of the 5'-leader sequence from pre-tRNA to produce the mature 5'-terminus. It can also cleave other RNA substrates such as 4.5S RNA. The protein component plays an auxiliary but essential role in vivo by binding to the 5'-leader sequence and broadening the substrate specificity of the ribozyme. In Synechococcus sp. (strain RCC307), this protein is Ribonuclease P protein component.